The primary structure comprises 482 residues: Protein DETOXIFICATION 9 (482 aa).

Helical transmembrane passes span 32–49 (VASM…QYLL), 64–84 (ALAG…GVLF), 111–131 (FTSI…WMFM), 144–164 (IAEL…GYSV), 180–200 (PMVL…WLMV), 209–229 (GAAA…WVYM), 261–281 (AMMC…SGLL), 289–309 (SVIS…NGIG), 332–352 (AAAA…SLFL), 374–394 (ITPI…LSGI), 403–423 (IGAY…GLLL), and 435–455 (WAGL…VIGF).

This sequence belongs to the multi antimicrobial extrusion (MATE) (TC 2.A.66.1) family.

It localises to the membrane. In Arabidopsis thaliana (Mouse-ear cress), this protein is Protein DETOXIFICATION 9.